The chain runs to 652 residues: Beta-mannosyltransferase 1 (652 aa).

Over 1-15 (MVDLFQWLKFYSMRR) the chain is Cytoplasmic. A helical membrane pass occupies residues 16–34 (LGQVAITLVLLNLFVFLGY). The Extracellular segment spans residues 35–652 (KFTPSTVIGS…LYQLQEEERS (618 aa)). N-linked (GlcNAc...) asparagine glycosylation is present at Asn-57. Residues 535–652 (PARYAKQMEN…LYQLQEEERS (118 aa)) adopt a coiled-coil conformation. A disordered region spans residues 536 to 621 (ARYAKQMENE…EAKENEAKKK (86 aa)).

It belongs to the BMT family.

It is found in the membrane. Beta-mannosyltransferase involved in cell wall biosynthesis. Involved in the beta-mannosylation of outer chains of N-glycans. This Komagataella phaffii (strain ATCC 76273 / CBS 7435 / CECT 11047 / NRRL Y-11430 / Wegner 21-1) (Yeast) protein is Beta-mannosyltransferase 1 (BMT1).